The sequence spans 371 residues: Cytochrome b (371 aa).

The next 4 membrane-spanning stretches (helical) occupy residues 25–45 (FGSMLLTCSALQVMTGFFLAI), 69–90 (WIMQNLHAIGASMFFICIYIHI), 105–125 (WLSGTTLLIILMATAFFGYVL), and 170–190 (FFALHFILPFAIISMSSIHIM). Heme b contacts are provided by His-75 and His-89. Residues His-174 and His-188 each coordinate heme b. His-193 lines the a ubiquinone pocket. Transmembrane regions (helical) follow at residues 218–238 (HKDILMLTIMITTMFTIMSFS), 280–300 (LGGTVALVLSVAILMTMPFTH), 312–332 (IMQLVFWTLIATFITITWAAT), and 339–358 (FTIIGQTTSFLYFSFFIMNP).

Belongs to the cytochrome b family. As to quaternary structure, the cytochrome bc1 complex contains 3 respiratory subunits (MT-CYB, CYC1 and UQCRFS1), 2 core proteins (UQCRC1 and UQCRC2) and probably 6 low-molecular weight proteins. Requires heme b as cofactor.

Its subcellular location is the mitochondrion inner membrane. Component of the ubiquinol-cytochrome c reductase complex (complex III or cytochrome b-c1 complex) that is part of the mitochondrial respiratory chain. The b-c1 complex mediates electron transfer from ubiquinol to cytochrome c. Contributes to the generation of a proton gradient across the mitochondrial membrane that is then used for ATP synthesis. The polypeptide is Cytochrome b (MT-CYB) (Coluber constrictor (Eastern racer)).